The chain runs to 317 residues: Ferrochelatase (317 aa).

Residues His192 and Glu271 each contribute to the Fe cation site.

It belongs to the ferrochelatase family.

The protein resides in the cytoplasm. It carries out the reaction heme b + 2 H(+) = protoporphyrin IX + Fe(2+). It participates in porphyrin-containing compound metabolism; protoheme biosynthesis; protoheme from protoporphyrin-IX: step 1/1. Functionally, catalyzes the ferrous insertion into protoporphyrin IX. The sequence is that of Ferrochelatase from Geobacter sp. (strain M21).